The following is a 287-amino-acid chain: Probable aquaporin PIP1-4 (287 aa).

The residue at position 1 (Met-1) is an N-acetylmethionine. The segment at 1 to 36 (MEGKEEDVRVGANKFPERQPIGTSAQSTDKDYKEPP) is disordered. Residues 1–55 (MEGKEEDVRVGANKFPERQPIGTSAQSTDKDYKEPPPAPLFEPGELSSWSFYRAG) lie on the Cytoplasmic side of the membrane. The helical transmembrane segment at 56–76 (IAEFIATFLFLYITVLTVMGV) threads the bilayer. Residues 77–92 (KRAPNMCASVGIQGIA) are Extracellular-facing. A helical transmembrane segment spans residues 93–113 (WAFGGMIFALVYCTAGISGGH). Topologically, residues 114–133 (INPAVTFGLFLARKLSLTRA) are cytoplasmic. The NPA 1 signature appears at 115-117 (NPA). A helical membrane pass occupies residues 134–154 (VFYMIMQCLGAICGAGVVKGF). At 155-175 (QPTPYQTLGGGANTVAHGYTK) the chain is on the extracellular side. Residues 176 to 196 (GSGLGAEIIGTFVLVYTVFSA) form a helical membrane-spanning segment. At 197–209 (TDAKRSARDSHVP) the chain is on the cytoplasmic side. Residues 210-230 (ILAPLPIGFAVFLVHLATIPI) traverse the membrane as a helical segment. Over 231–257 (TGTGINPARSLGAAIIYNKDHSWDDHW) the chain is Extracellular. An NPA 2 motif is present at residues 236-238 (NPA). A helical membrane pass occupies residues 258 to 278 (IFWVGPFIGAALAALYHQIVI). At 279-287 (RAIPFKSKS) the chain is on the cytoplasmic side. Phosphoserine is present on Ser-285.

This sequence belongs to the MIP/aquaporin (TC 1.A.8) family. PIP (TC 1.A.8.11) subfamily. Predominantly expressed in roots and green siliques. Also expressed above ground and in flower buds.

It localises to the cell membrane. In terms of biological role, aquaporins facilitate the transport of water and small neutral solutes across cell membranes. This chain is Probable aquaporin PIP1-4 (PIP1.4), found in Arabidopsis thaliana (Mouse-ear cress).